The following is a 684-amino-acid chain: MADPSKYRPAPGSIPTDPGVYKFRDENRRVIYVGKAKNLRARLSNYFQDITQLHPRTRQMVLTAASVEWTVVASEVEALQLEYTWIKRFDPRFNVMYRDDKTYPMLAVSVGESIPRAFFYRGPRRKGVRYFGPYSHAWAVRESLDLLTRIFPMRTCAKGVFNRHERLGRPCLLGYIGKCDAPCIGRVSPEEHRETVNQLISFMNGNTAPVRKRVTQRMEEAAENLEFELAARLRDDLGAIDKLMEQQAVVLPDGTDADLIAFSSDELEAAVQIFHVRTGRIRGQRGWVVERSGDQATTDVVEEGQADPGLPALIQNFLIQFYSDAVERQRQEAAEDAKLERRGVDQESHAEPRQGNAIPREILVQALPEEAEEVKIVLEELRGAQIDVRVPQRGDKRALLETVERNAKEQLKQHKLKRVGDLTARSAALQELQEALGMDSAPLRIECTDISHIQGTDVVASLVVFEDGLPRKSDYRRYRIKEAAGDGRSNDVGSIAEVTRRRFKHHHDDKRAVPDEELENTTFAEEMVREEAASQTKRSSYPPQLFIVDGGAPQVAAAQAVFDELGIVDVTLIGLAKRLEEVWVPGDDEPVILPRNSQALFLLQHLRDEAHRVAISYHRQQRSKRMRSSVLDAVPGLGPQRRTDLVKHFGSVKKLKEASVEEIAEVKGFGPKLAQTVFDHLHAS.

The GIY-YIG domain occupies 16–95; the sequence is TDPGVYKFRD…IKRFDPRFNV (80 aa). The region spanning 208–243 is the UVR domain; it reads APVRKRVTQRMEEAAENLEFELAARLRDDLGAIDKL. The segment covering 332–352 has biased composition (basic and acidic residues); sequence EAAEDAKLERRGVDQESHAEP. The tract at residues 332 to 357 is disordered; that stretch reads EAAEDAKLERRGVDQESHAEPRQGNA.

Belongs to the UvrC family. As to quaternary structure, interacts with UvrB in an incision complex.

The protein resides in the cytoplasm. Its function is as follows. The UvrABC repair system catalyzes the recognition and processing of DNA lesions. UvrC both incises the 5' and 3' sides of the lesion. The N-terminal half is responsible for the 3' incision and the C-terminal half is responsible for the 5' incision. This Corynebacterium aurimucosum (strain ATCC 700975 / DSM 44827 / CIP 107346 / CN-1) (Corynebacterium nigricans) protein is UvrABC system protein C.